The primary structure comprises 505 residues: Midnolin (505 aa).

Residues 32-106 (MSLAIHSTTG…LTLVPTVEAG (75 aa)) enclose the Ubiquitin-like domain. 3 disordered regions span residues 155–176 (PWHRQGPQSPERGGERPQVSDF), 228–305 (SIAT…SRKP), and 440–485 (RLRR…GLDF). Over residues 238–262 (RPVSSAARVPPVSSSPSSPVSPSPV) the composition is skewed to low complexity. Residues 263–282 (TAGTFQSHAASTTCPEQTDC) are compositionally biased toward polar residues. Residues 283–300 (SPPASSNTTSTPGSSPTP) are compositionally biased toward low complexity.

As to quaternary structure, interacts with GCK; the interaction occurs preferentially at low glucose levels. Interacts with the proteasome.

It localises to the nucleus. The protein localises to the cytoplasm. Its subcellular location is the cytosol. The protein resides in the nucleolus. In terms of biological role, facilitates the ubiquitin-independent proteasomal degradation of stimulus-induced transcription factors such as FOSB, EGR1, NR4A1, and IRF4 to the proteasome for degradation. Promotes also the degradation of other substrates such as CBX4. Plays a role in inhibiting the activity of glucokinase GCK and both glucose-induced and basal insulin secretion. The polypeptide is Midnolin (Rattus norvegicus (Rat)).